The following is a 704-amino-acid chain: Polyribonucleotide nucleotidyltransferase (704 aa).

Mg(2+) is bound by residues Asp486 and Asp492. The KH domain maps to 553–612 (PRIYTMKINPEKIKDVIGKGGSVIRALTDETGTTIEIEDDGTIKIAATDGDKAKHAIRRI). The S1 motif domain occupies 622-690 (GRIYAGKVTR…RQGRIRLSIK (69 aa)).

The protein belongs to the polyribonucleotide nucleotidyltransferase family. As to quaternary structure, component of the RNA degradosome, which is a multiprotein complex involved in RNA processing and mRNA degradation. Requires Mg(2+) as cofactor.

The protein localises to the cytoplasm. It carries out the reaction RNA(n+1) + phosphate = RNA(n) + a ribonucleoside 5'-diphosphate. Functionally, involved in mRNA degradation. Catalyzes the phosphorolysis of single-stranded polyribonucleotides processively in the 3'- to 5'-direction. In Yersinia pseudotuberculosis serotype IB (strain PB1/+), this protein is Polyribonucleotide nucleotidyltransferase.